Consider the following 3902-residue polypeptide: Mediator of RNA polymerase II transcription subunit 12 (3902 aa).

Disordered regions lie at residues 414 to 576 (ESLT…EELP), 619 to 674 (FEPF…NPKL), 694 to 940 (AFDP…LEAL), 977 to 1029 (VVEK…PEPP), 1812 to 1831 (TSHK…TETR), 2463 to 2675 (TVEP…NRKQ), 2719 to 2771 (AGAS…SSSM), 2876 to 3151 (RIME…PEMQ), 3195 to 3549 (LQAG…SSNQ), and 3563 to 3902 (AGLN…QQQY). The span at 420–430 (EPEEDPEEGPE) shows a compositional bias: acidic residues. Positions 709–721 (PTPPEAPPPPPPV) are enriched in pro residues. Composition is skewed to basic and acidic residues over residues 740 to 802 (EDGK…EHLN), 912 to 928 (KAGD…KKPD), 977 to 1004 (VVEK…EKLP), and 1018 to 1027 (KTPEKPKTPE). A compositionally biased stretch (basic residues) spans 1812-1824 (TSHKTKDVKRKSA). Residues 2409–3902 (QTTRLDKVAK…MGQFPNQQQY (1494 aa)) are required for nuclear localization. The span at 2474 to 2547 (AAVKKPEEET…VTAKDTEKDT (74 aa)) shows a compositional bias: basic and acidic residues. The stretch at 2480–2526 (EEETAEKKKDEAKKADEKTTKADDEKKKDETADAKKDNEKQKEEKDK) forms a coiled coil. Low complexity-rich tracts occupy residues 2548–2566 (AAPT…AAPD), 2614–2632 (SRAN…SSTT), and 2734–2748 (PHPG…QHQG). Basic and acidic residues predominate over residues 2876–2979 (RIMEEQRILR…ERLERERVAR (104 aa)). Low complexity-rich tracts occupy residues 2980–3001 (EALA…QAQQ), 3010–3143 (QQQR…QRNP), 3196–3205 (QAGQAAGQQQ), and 3226–3236 (PQQQQQQPQQP). The span at 3237 to 3248 (GTSQIPNTTPTR) shows a compositional bias: polar residues. Composition is skewed to low complexity over residues 3250 to 3275 (ANPM…GQPG), 3284 to 3295 (GQQQQNQFQRQG), and 3317 to 3389 (GQQQ…FGRQ). Residues 3391 to 3409 (APNQENFQQQPGFNQNAAG) are compositionally biased toward polar residues. Composition is skewed to low complexity over residues 3410–3446 (QNYQ…QQQN), 3454–3539 (QSQQ…QGNQ), and 3570–3619 (SSGN…RPGM). The segment covering 3620-3649 (GQQGMGQQGMGQQGGMGQSGRGQPGMGGQS) has biased composition (gly residues). Low complexity-rich tracts occupy residues 3663-3700 (MGQP…QQQH), 3710-3742 (QQGR…QQAQ), and 3760-3830 (QQQQ…HRGQ). Positions 3831-3841 (GQQGHGMGGAG) are enriched in gly residues. A compositionally biased stretch (low complexity) spans 3842 to 3888 (QQHQQVPQQQQNQYFQPQQQQDQRMQQQPGGQQQQQQGQSGQQQNNQ). Residues 3889-3902 (HYNNMGQFPNQQQY) show a composition bias toward polar residues.

This sequence belongs to the Mediator complex subunit 12 family. Component of the Mediator complex.

It localises to the nucleus. Functionally, component of the Mediator complex, a coactivator involved in regulated gene transcription of nearly all RNA polymerase II-dependent genes. Mediator functions as a bridge to convey information from gene-specific regulatory proteins to the basal RNA polymerase II transcription machinery. Mediator is recruited to promoters by direct interactions with regulatory proteins and serves as a scaffold for the assembly of a functional preinitiation complex with RNA polymerase II and the general transcription factors. The sequence is that of Mediator of RNA polymerase II transcription subunit 12 (dpy-22) from Caenorhabditis briggsae.